The chain runs to 259 residues: AA9 family lytic polysaccharide monooxygenase E (259 aa).

Positions 1–20 (MKATVLAGLAAVIAAQGVAG) are cleaved as a signal peptide. Cu(2+) contacts are provided by His21 and His99. A disulfide bridge connects residues Cys69 and Cys193. O2 is bound by residues His179 and Gln188. Tyr190 lines the Cu(2+) pocket.

The protein belongs to the polysaccharide monooxygenase AA9 family. Cu(2+) is required as a cofactor.

The protein resides in the secreted. It catalyses the reaction [(1-&gt;4)-beta-D-glucosyl]n+m + reduced acceptor + O2 = 4-dehydro-beta-D-glucosyl-[(1-&gt;4)-beta-D-glucosyl]n-1 + [(1-&gt;4)-beta-D-glucosyl]m + acceptor + H2O.. Functionally, lytic polysaccharide monooxygenase (LPMO) that depolymerizes crystalline and amorphous polysaccharides via the oxidation of scissile alpha- or beta-(1-4)-glycosidic bonds, yielding C1 or C4 oxidation products. Catalysis by LPMOs requires the reduction of the active-site copper from Cu(II) to Cu(I) by a reducing agent and H(2)O(2) or O(2) as a cosubstrate. The protein is AA9 family lytic polysaccharide monooxygenase E of Malbranchea cinnamomea (Thermophilic fungus).